The primary structure comprises 187 residues: Peptidyl-tRNA hydrolase (187 aa).

Tyrosine 15 is a tRNA binding site. The active-site Proton acceptor is the histidine 20. 3 residues coordinate tRNA: phenylalanine 64, asparagine 66, and asparagine 112.

This sequence belongs to the PTH family. As to quaternary structure, monomer.

The protein localises to the cytoplasm. The enzyme catalyses an N-acyl-L-alpha-aminoacyl-tRNA + H2O = an N-acyl-L-amino acid + a tRNA + H(+). Hydrolyzes ribosome-free peptidyl-tRNAs (with 1 or more amino acids incorporated), which drop off the ribosome during protein synthesis, or as a result of ribosome stalling. In terms of biological role, catalyzes the release of premature peptidyl moieties from peptidyl-tRNA molecules trapped in stalled 50S ribosomal subunits, and thus maintains levels of free tRNAs and 50S ribosomes. This Parabacteroides distasonis (strain ATCC 8503 / DSM 20701 / CIP 104284 / JCM 5825 / NCTC 11152) protein is Peptidyl-tRNA hydrolase.